The primary structure comprises 255 residues: LRLLLKLLLLLLGQQKHWPERQQQQQPQPWLDRQQQQQQHNQQLQKQQWPEGQRQQLWPEQQQQQWPEQHQQAQQQQQWPQQQPQMQQEQWPQQQPQVQQQQQWPQQQHRRQHGQQQQCMNSQQQLQQCGQQQQQQLQQQWSEQQQQQQQQQWPEQPEQQQQQQWPEQQQQQWSDQNQQQQAQQWQAQQQQQWPQQQQQPQQQQQQQQQQDLGPDGVGIVVPYLGSSPADFEVQNLGVSVLPRIKLPLPKFDNDD.

12 tandem repeats follow at residues 18 to 48 (WPER…QKQQ), 49 to 57 (WPEGQRQQL), 58 to 65 (WPEQQQQQ), 66 to 78 (WPEQ…QQQQ), 79 to 90 (WPQQQPQMQQEQ), 91 to 103 (WPQQ…QQQQ), 104 to 140 (WPQQ…LQQQ), 141 to 152 (WSEQQQQQQQQQ), 153 to 164 (WPEQPEQQQQQQ), 165 to 172 (WPEQQQQQ), 173 to 192 (WSDQ…QQQQ), and 193 to 210 (WPQQ…QQQQ). The segment at 18-90 (WPERQQQQQP…QQQPQMQQEQ (73 aa)) is disordered. The tract at residues 18–210 (WPERQQQQQP…QQQQQQQQQQ (193 aa)) is 12 X approximate tandem repeats, Gln-rich. Residues 149–210 (QQQQWPEQPE…QQQQQQQQQQ (62 aa)) show a composition bias toward low complexity. The disordered stretch occupies residues 149 to 224 (QQQQWPEQPE…DGVGIVVPYL (76 aa)).

In terms of assembly, may be covalently linked by disulfide bonds to other polypeptides to form the 80 kDa antigen.

Unknown. The Gln-rich tandem repeats may be important for an unknown aspect of the parasitic life cycle. May be an important immunogen. The sequence is that of Antigen LPMC-61 from Eimeria tenella (Coccidian parasite).